The sequence spans 387 residues: Putative ankyrin repeat protein RBE_0984 (387 aa).

5 ANK repeats span residues 50–79, 88–119, 123–154, 159–188, and 210–239; these read YGNT…DKDI, HRET…AINV, RKHT…VINV, HKDS…KENI, and VCKM…LKGE. 2 coiled-coil regions span residues 251-278 and 311-352; these read FEDI…KKCE and SISA…ALEK.

The chain is Putative ankyrin repeat protein RBE_0984 from Rickettsia bellii (strain RML369-C).